The following is a 427-amino-acid chain: Chaperone SurA (427 aa).

Residues 1–13 (MLGVALLSGAVHA) form the signal peptide. 2 PpiC domains span residues 164-265 (SEEY…KLEE) and 275-374 (RDEV…EVLG).

Its subcellular location is the periplasm. The catalysed reaction is [protein]-peptidylproline (omega=180) = [protein]-peptidylproline (omega=0). In terms of biological role, chaperone involved in the correct folding and assembly of outer membrane proteins. Recognizes specific patterns of aromatic residues and the orientation of their side chains, which are found more frequently in integral outer membrane proteins. May act in both early periplasmic and late outer membrane-associated steps of protein maturation. The chain is Chaperone SurA from Pseudomonas putida (strain ATCC 47054 / DSM 6125 / CFBP 8728 / NCIMB 11950 / KT2440).